The sequence spans 77 residues: Large ribosomal subunit protein uL29 (77 aa).

This sequence belongs to the universal ribosomal protein uL29 family.

This is Large ribosomal subunit protein uL29 from Cutibacterium acnes (strain DSM 16379 / KPA171202) (Propionibacterium acnes).